A 101-amino-acid chain; its full sequence is Nucleoid-associated protein Cla_0113 (101 aa).

The protein belongs to the YbaB/EbfC family. In terms of assembly, homodimer.

Its subcellular location is the cytoplasm. The protein resides in the nucleoid. Binds to DNA and alters its conformation. May be involved in regulation of gene expression, nucleoid organization and DNA protection. In Campylobacter lari (strain RM2100 / D67 / ATCC BAA-1060), this protein is Nucleoid-associated protein Cla_0113.